The primary structure comprises 1063 residues: Unconventional myosin-Ic (1063 aa).

Methionine 1 carries the post-translational modification N-acetylmethionine. Positions glycine 47–glutamate 731 constitute a Myosin motor domain. ATP is bound by residues asparagine 88, tyrosine 96, serine 139–glutamate 148, and asparagine 192–serine 196. Residue lysine 383 is modified to N6-methyllysine. Residue serine 408 is modified to Phosphoserine. Lysine 486 is modified (N6-acetyllysine). Serine 536 bears the Phosphoserine mark. The actin-binding stretch occupies residues leucine 608–aspartate 630. IQ domains lie at arginine 734 to valine 757 and lysine 758 to threonine 786. A phosphoserine mark is found at serine 864 and serine 1041. The TH1 domain maps to lysine 885–arginine 1059.

It belongs to the TRAFAC class myosin-kinesin ATPase superfamily. Myosin family. As to quaternary structure, interacts (via its IQ motifs) with CABP1 and CIB1; the interaction with CABP1 and CIB1 is calcium-dependent. Interacts (via tail domain) with PLEKHB1 (via PH domain); the interaction is not affected by the presence or absence of calcium and CALM. Interacts with POLR1A. Interacts with POLR2A. Component of the B-WICH complex, at least composed of SMARCA5/SNF2H, BAZ1B/WSTF, SF3B1, DEK, MYO1C, ERCC6, MYBBP1A and DDX21. Interacts (via its IQ motifs) with CALM; this precludes interaction with YWHAB. Interacts with YWHAB; this precludes interaction with CALM. Interacts with RPS6. Interacts with actin. Interacts with LLPH. Interacts with GLUT4. Interacts (via its IQ motifs) with SH3BGRL3; the interaction is dependent on calcium and takes place at membrane ruffles. In terms of processing, isoform 2 contains a N-acetylmethionine at position 1. As to expression, widely expressed.

Its subcellular location is the cytoplasm. The protein localises to the nucleus. It localises to the cell cortex. It is found in the cell projection. The protein resides in the ruffle membrane. Its subcellular location is the cytoplasmic vesicle. The protein localises to the stereocilium membrane. It localises to the nucleolus. It is found in the nucleoplasm. In terms of biological role, myosins are actin-based motor molecules with ATPase activity. Unconventional myosins serve in intracellular movements. Their highly divergent tails are presumed to bind to membranous compartments, which would be moved relative to actin filaments. Involved in glucose transporter recycling in response to insulin by regulating movement of intracellular GLUT4-containing vesicles to the plasma membrane. Component of the hair cell's (the sensory cells of the inner ear) adaptation-motor complex. Acts as a mediator of adaptation of mechanoelectrical transduction in stereocilia of vestibular hair cells. Binds phosphoinositides and links the actin cytoskeleton to cellular membranes. Functionally, isoform 3 is involved in regulation of transcription. Associated with transcriptional active ribosomal genes. Appears to cooperate with the WICH chromatin-remodeling complex to facilitate transcription. Necessary for the formation of the first phosphodiester bond during transcription initiation. The polypeptide is Unconventional myosin-Ic (MYO1C) (Bos taurus (Bovine)).